The chain runs to 319 residues: GCN5-related N-acetyltransferase 5, chloroplastic (319 aa).

The transit peptide at 1-55 (MAALSISLAFSVDSLKPTQSTKFGFSSSSHRYPLLYSCKSHRSNLRFAFPPSSVS) directs the protein to the chloroplast. Residues 109–297 (MWVRVMRHEE…KHLMRKKLLP (189 aa)) form the N-acetyltransferase domain. Residues 218-220 (MTV), 226-231 (RRGIGW), 258-260 (DEA), and Y265 each bind acetyl-CoA. Catalysis depends on Y265, which acts as the Proton donor.

This sequence belongs to the acetyltransferase family. GNAT subfamily. As to quaternary structure, oligomer. Autoacetylated. Expressed in green tissues.

The protein resides in the plastid. It localises to the chloroplast. The catalysed reaction is an N-terminal L-alpha-aminoacyl-[protein] + acetyl-CoA = N-terminal N(alpha)-acetyl-L-alpha-aminoacyl-[protein] + CoA + H(+). The enzyme catalyses L-lysyl-[protein] + acetyl-CoA = N(6)-acetyl-L-lysyl-[protein] + CoA + H(+). It carries out the reaction N-terminal L-alanyl-[protein] + acetyl-CoA = N-terminal N(alpha)-acetyl-L-alanyl-[protein] + CoA + H(+). It catalyses the reaction N-terminal L-seryl-[protein] + acetyl-CoA = N-terminal N(alpha)-acetyl-L-seryl-[protein] + CoA + H(+). The catalysed reaction is N-terminal L-methionyl-[protein] + acetyl-CoA = N-terminal N(alpha)-acetyl-L-methionyl-[protein] + CoA + H(+). The enzyme catalyses N-terminal L-valyl-[protein] + acetyl-CoA = N-terminal N(alpha)-acetyl-L-valyl-[protein] + CoA + H(+). It carries out the reaction N-terminal L-threonyl-[protein] + acetyl-CoA = N-terminal N(alpha)-acetyl-L-threonyl-[protein] + CoA + H(+). In terms of biological role, protein acetyltransferase with dual specificity triggering both N-alpha-acetylation (NTA), with a large spectrum of modified N-termini, including methionine, alanine, serine and to a lower extent threonine and valine as substrates, and epsilon-lysine acetylation (KA). The sequence is that of GCN5-related N-acetyltransferase 5, chloroplastic from Arabidopsis thaliana (Mouse-ear cress).